A 143-amino-acid polypeptide reads, in one-letter code: Large ribosomal subunit protein uL11 (143 aa).

This sequence belongs to the universal ribosomal protein uL11 family. As to quaternary structure, part of the ribosomal stalk of the 50S ribosomal subunit. Interacts with L10 and the large rRNA to form the base of the stalk. L10 forms an elongated spine to which L12 dimers bind in a sequential fashion forming a multimeric L10(L12)X complex. Post-translationally, one or more lysine residues are methylated.

Its function is as follows. Forms part of the ribosomal stalk which helps the ribosome interact with GTP-bound translation factors. The protein is Large ribosomal subunit protein uL11 of Pseudomonas fluorescens (strain SBW25).